Here is a 72-residue protein sequence, read N- to C-terminus: MKKDIHPDYHDITVVMTDGSEFVTRSTYKGESLRLDIDPKSHPAWTGVHRLIDSGGQLAKFNKKFAGFGLKK.

It belongs to the bacterial ribosomal protein bL31 family. Type A subfamily. Part of the 50S ribosomal subunit.

Its function is as follows. Binds the 23S rRNA. This Rhodospirillum rubrum (strain ATCC 11170 / ATH 1.1.1 / DSM 467 / LMG 4362 / NCIMB 8255 / S1) protein is Large ribosomal subunit protein bL31.